We begin with the raw amino-acid sequence, 448 residues long: uncharacterized protein (448 aa).

The chain crosses the membrane as a helical span at residues leucine 19 to leucine 41. Residues tyrosine 105–aspartate 181 enclose the SH3b domain.

The protein resides in the membrane. This is an uncharacterized protein from Treponema pallidum (strain Nichols).